Here is a 255-residue protein sequence, read N- to C-terminus: Probable transcriptional regulatory protein CMS0715 (255 aa).

The protein belongs to the TACO1 family.

It is found in the cytoplasm. In Clavibacter sepedonicus (Clavibacter michiganensis subsp. sepedonicus), this protein is Probable transcriptional regulatory protein CMS0715.